The sequence spans 296 residues: tRNA uridine(34) hydroxylase (296 aa).

In terms of domain architecture, Rhodanese spans 121–215 (AQPDVAVIDT…YLEDIPQDQS (95 aa)). The active-site Cysteine persulfide intermediate is the Cys-175.

It belongs to the TrhO family.

The enzyme catalyses uridine(34) in tRNA + AH2 + O2 = 5-hydroxyuridine(34) in tRNA + A + H2O. Catalyzes oxygen-dependent 5-hydroxyuridine (ho5U) modification at position 34 in tRNAs. In Roseobacter denitrificans (strain ATCC 33942 / OCh 114) (Erythrobacter sp. (strain OCh 114)), this protein is tRNA uridine(34) hydroxylase.